Here is a 516-residue protein sequence, read N- to C-terminus: Bifunctional pantoate ligase/cytidylate kinase (516 aa).

The interval 1–279 (MVRKIFQTNA…CGSTRLIDHT (279 aa)) is pantoate--beta-alanine ligase. Residue 29–36 (MGGLHPGH) coordinates ATP. The Proton donor role is filled by His-36. (R)-pantoate is bound at residue Gln-64. Position 64 (Gln-64) interacts with beta-alanine. 153–156 (GEKD) is a binding site for ATP. Gln-159 contributes to the (R)-pantoate binding site. An ATP-binding site is contributed by 190 to 193 (YSSR). Positions 280-516 (FLMHRKPIIA…PEEVWPTPNS (237 aa)) are cytidylate kinase.

It in the N-terminal section; belongs to the pantothenate synthetase family. The protein in the C-terminal section; belongs to the cytidylate kinase family. Type 1 subfamily.

It is found in the cytoplasm. It catalyses the reaction (R)-pantoate + beta-alanine + ATP = (R)-pantothenate + AMP + diphosphate + H(+). The enzyme catalyses CMP + ATP = CDP + ADP. It carries out the reaction dCMP + ATP = dCDP + ADP. It participates in cofactor biosynthesis; (R)-pantothenate biosynthesis; (R)-pantothenate from (R)-pantoate and beta-alanine: step 1/1. Its function is as follows. Catalyzes the condensation of pantoate with beta-alanine in an ATP-dependent reaction via a pantoyl-adenylate intermediate. Functionally, catalyzes the transfer of a phosphate group from ATP to either CMP or dCMP to form CDP or dCDP and ADP, respectively. This chain is Bifunctional pantoate ligase/cytidylate kinase, found in Prochlorococcus marinus (strain NATL2A).